Here is a 478-residue protein sequence, read N- to C-terminus: Endoplasmic reticulum oxidoreductin-1 (478 aa).

A signal peptide spans 1 to 20; that stretch reads MREPLLQLIVLSLIIIVVNT. 6 cysteine pairs are disulfide-bonded: Cys-28-Cys-41, Cys-30-Cys-39, Cys-79-Cys-384, Cys-88-Cys-93, Cys-209-Cys-230, and Cys-387-Cys-390. The disordered stretch occupies residues 117–143; the sequence is AAVKEEEDDDAEKCADAGNNIDPMDRT. Positions 188, 190, and 201 each coordinate FAD. Ser-241, His-244, Arg-283, and Arg-295 together coordinate FAD. Asn-377 carries an N-linked (GlcNAc...) asparagine glycan. Residues 459–478 are disordered; that stretch reads ESVMNTAADGPPRKSNKIDL.

This sequence belongs to the EROs family. As to quaternary structure, may function both as a monomer and a homodimer. FAD serves as cofactor.

The protein localises to the endoplasmic reticulum membrane. Oxidoreductase involved in disulfide bond formation in the endoplasmic reticulum. Efficiently reoxidizes pdi-1, the enzyme catalyzing protein disulfide formation, in order to allow pdi-1 to sustain additional rounds of disulfide formation. Following pdi reoxidation, passes its electrons to molecular oxygen via FAD, leading to the production of reactive oxygen species (ROS) in the cell. In Caenorhabditis elegans, this protein is Endoplasmic reticulum oxidoreductin-1 (ero-1).